A 670-amino-acid chain; its full sequence is MRRLTISGLLISLAKLCAGMEINVPSSSDVWTSGHIEPLEWSVVSTDPLQANVWLINEVEYPPTSRYIMTINTFDENATFPALDLSPGYGYQISFTSIRDDSVIYAQSGTFYIVGGEGISSTTGSTFQSMTTFTSSQTNSGHASASTSIPSTAITVTANSTIYSSATSSFPYSTDVSVSTGTSTDIVTLPPPASSTSSFSTITNTSMIPSSSSFTTTTGSPYYNTSSFLPSSVISSASLSSSSVLPTSIITSTSTPVTVSSSSLSSFTPSYSTNLTTTGSTTTTGSATVSSSPFYSNSSVIPTSVPSSVSSFTSSSSSYTTTLTASNTSVTYTGTGTGSATFTSSPPFYSNSSVIPTSVPSSVSSFTSSNSSYTTTLTASNTSITYTGTGTGSATFTSSPPFYSNSSVIPTSVPSSVSSFTSSNSSYTTTLTASNTTVTFTGTGTGSATFTSSPPFYSNSSVIPTSAPSSVSSFTSSNSSYTTTLTASNTTVTFTGTGTGSATATSSSPYYSNSSIIVPTTVSTSGSVSSFSSSPSPTSSFSGTSALSSSSNEETTTTTQVTYTTSPEETTTTMTTTTCSSRPEETISTVSTTSTVSESGSSSASITSTYPSSTLSMTTSHLSSSSVHSSSAHSSSSRSSSMSLPPSAGSSTSLQRISLLCVFIPLLFLF.

An N-terminal signal peptide occupies residues 1–19; the sequence is MRRLTISGLLISLAKLCAG. Residues N77, N159, N204, N224, N274, N297, N327, N351, N370, N381, N405, N424, N435, N459, N478, N489, and N513 are each glycosylated (N-linked (GlcNAc...) asparagine). The segment at 526–651 is disordered; that stretch reads GSVSSFSSSP…MSLPPSAGSS (126 aa).

The protein resides in the secreted. It is found in the endoplasmic reticulum. This is Serine/threonine-rich protein adg2 (adg2) from Schizosaccharomyces pombe (strain 972 / ATCC 24843) (Fission yeast).